Reading from the N-terminus, the 67-residue chain is ATP synthase subunit c (67 aa).

Helical transmembrane passes span 6–26 (ILAL…LVAN) and 46–66 (IMGV…TFFV).

Belongs to the ATPase C chain family. In terms of assembly, F-type ATPases have 2 components, F(1) - the catalytic core - and F(0) - the membrane proton channel. F(1) has five subunits: alpha(3), beta(3), gamma(1), delta(1), epsilon(1). F(0) has three main subunits: a(1), b(2) and c(10-14). The alpha and beta chains form an alternating ring which encloses part of the gamma chain. F(1) is attached to F(0) by a central stalk formed by the gamma and epsilon chains, while a peripheral stalk is formed by the delta and b chains.

It is found in the cell membrane. Functionally, f(1)F(0) ATP synthase produces ATP from ADP in the presence of a proton or sodium gradient. F-type ATPases consist of two structural domains, F(1) containing the extramembraneous catalytic core and F(0) containing the membrane proton channel, linked together by a central stalk and a peripheral stalk. During catalysis, ATP synthesis in the catalytic domain of F(1) is coupled via a rotary mechanism of the central stalk subunits to proton translocation. In terms of biological role, key component of the F(0) channel; it plays a direct role in translocation across the membrane. A homomeric c-ring of between 10-14 subunits forms the central stalk rotor element with the F(1) delta and epsilon subunits. The chain is ATP synthase subunit c from Streptococcus mutans serotype c (strain ATCC 700610 / UA159).